The sequence spans 237 residues: Undecaprenyl-diphosphatase (237 aa).

7 helical membrane-spanning segments follow: residues glutamine 38–isoleucine 58, tryptophan 65–phenylalanine 85, leucine 92–phenylalanine 112, methionine 126–isoleucine 146, alanine 166–leucine 186, isoleucine 191–serine 211, and glycine 217–glycine 237.

Belongs to the UppP family.

The protein resides in the cell inner membrane. It carries out the reaction di-trans,octa-cis-undecaprenyl diphosphate + H2O = di-trans,octa-cis-undecaprenyl phosphate + phosphate + H(+). In terms of biological role, catalyzes the dephosphorylation of undecaprenyl diphosphate (UPP). Confers resistance to bacitracin. This Thermotoga petrophila (strain ATCC BAA-488 / DSM 13995 / JCM 10881 / RKU-1) protein is Undecaprenyl-diphosphatase.